A 315-amino-acid polypeptide reads, in one-letter code: Calumenin (315 aa).

The first 19 residues, methionine 1–serine 19, serve as a signal peptide directing secretion. EF-hand domains lie at glutamate 68–lysine 103, tyrosine 104–aspartate 139, glutamine 151–aspartate 186, methionine 188–aspartate 223, tryptophan 229–aspartate 264, and histidine 265–serine 300. 9 residues coordinate Ca(2+): aspartate 81, aspartate 83, aspartate 85, tyrosine 87, glutamate 92, aspartate 117, asparagine 119, aspartate 121, and glutamate 128. Asparagine 131 carries N-linked (GlcNAc...) asparagine glycosylation. Ca(2+)-binding residues include aspartate 164, aspartate 166, aspartate 168, glutamate 175, aspartate 201, asparagine 203, aspartate 205, glutamate 212, aspartate 242, asparagine 244, aspartate 246, lysine 248, glutamate 253, aspartate 278, asparagine 280, aspartate 282, lysine 284, and glutamate 289. A Prevents secretion from ER motif is present at residues histidine 312–phenylalanine 315.

The protein belongs to the CREC family. In terms of assembly, interacts with ggcx.

The protein resides in the endoplasmic reticulum membrane. The protein localises to the golgi apparatus. Its subcellular location is the secreted. It localises to the melanosome. It is found in the sarcoplasmic reticulum lumen. Functionally, involved in regulation of vitamin K-dependent carboxylation of multiple N-terminal glutamate residues. Seems to inhibit gamma-carboxylase ggcx. Binds 7 calcium ions with a low affinity. The sequence is that of Calumenin (calu) from Xenopus tropicalis (Western clawed frog).